The primary structure comprises 465 residues: Phosphomannomutase/phosphoglucomutase (465 aa).

Serine 110 acts as the Phosphoserine intermediate in catalysis. Serine 110, aspartate 244, aspartate 246, and aspartate 248 together coordinate Mg(2+). The substrate site is built by glutamate 327, serine 329, and histidine 331.

Belongs to the phosphohexose mutase family. In terms of assembly, monomer. Mg(2+) serves as cofactor.

It catalyses the reaction alpha-D-mannose 1-phosphate = D-mannose 6-phosphate. It carries out the reaction alpha-D-glucose 1-phosphate = alpha-D-glucose 6-phosphate. Its pathway is nucleotide-sugar biosynthesis; GDP-alpha-D-mannose biosynthesis; alpha-D-mannose 1-phosphate from D-fructose 6-phosphate: step 2/2. It functions in the pathway bacterial outer membrane biogenesis; lipopolysaccharide biosynthesis. The phosphomannomutase activity produces a precursor for alginate polymerization. The alginate layer causes a mucoid phenotype and provides a protective barrier against host immune defenses and antibiotics. Also involved in core-LPS biosynthesis due to its phosphoglucomutase activity. Essential for biofilm production. This is Phosphomannomutase/phosphoglucomutase (algC) from Pseudomonas syringae pv. tomato (strain ATCC BAA-871 / DC3000).